The primary structure comprises 193 residues: Activity-regulated cytoskeleton associated protein 2 (193 aa).

The protein belongs to the ARC/ARG3.1 family. Homooligomer; homooligomerizes into virion-like capsids.

The protein localises to the extracellular vesicle membrane. Its function is as follows. Self-assembles into virion-like capsids that encapsulate RNAs and mediate intercellular RNA transfer. Arc2 protein is released from cells in extracellular vesicles that mediate the transfer of mRNA into neighboring cells. The protein is Activity-regulated cytoskeleton associated protein 2 of Drosophila melanogaster (Fruit fly).